The sequence spans 630 residues: Sodium-dependent serotonin transporter (630 aa).

Residues 1-87 (METTALNSQK…ERETWGKKVD (87 aa)) lie on the Cytoplasmic side of the membrane. Position 47 is a phosphotyrosine (Tyr-47). The chain crosses the membrane as a helical span at residues 88-112 (FLLSVIGYAVDLGNIWRFPYVCYQN). Na(+) is bound by residues Gly-94, Ala-96, Val-97, Asp-98, and Asn-101. Asp-98 serves as a coordination point for serotonin. The Extracellular segment spans residues 113 to 115 (GGG). A helical membrane pass occupies residues 116-135 (AFLLPYIIMAIFGGIPLFYM). The Cytoplasmic portion of the chain corresponds to 136 to 160 (ELALGQYHRNGCISIWRKICPIFKG). Tyr-142 carries the phosphotyrosine modification. The helical transmembrane segment at 161–186 (IGYTICIIAFYIASYYNTIIAWALYY) threads the bilayer. Topologically, residues 187–252 (LISSFTDRLP…KGLQDVGGVS (66 aa)) are extracellular. The cysteines at positions 200 and 209 are disulfide-linked. N-linked (GlcNAc...) asparagine glycans are attached at residues Asn-208 and Asn-217. Residues 253–271 (WQLTLCIMLIFTIIYFSIW) form a helical membrane-spanning segment. Over 272-277 (KGVKTS) the chain is Cytoplasmic. The residue at position 276 (Thr-276) is a Phosphothreonine. The chain crosses the membrane as a helical span at residues 278 to 297 (GKVVWVTATFPYIVLSVLLV). The Extracellular segment spans residues 298–324 (RGATLPGAWKGVLFYLKPNWQKLLETG). A helical transmembrane segment spans residues 325-347 (VWIDAAAQIFFSLGPGFGVLLAF). Ser-336 provides a ligand contact to Na(+). The Cytoplasmic portion of the chain corresponds to 348–360 (ASYNKFNNNCYQD). A helical membrane pass occupies residues 361–380 (ALVTSAVNCMTSFVSGFVIF). Asn-368 is a binding site for Na(+). Over 381-421 (TVLGYMAEMRSEDVSEVAKDAGPSLLFITYAEAIANMPAST) the chain is Extracellular. Residues 422 to 443 (FFAIIFFLMLITLGLDSTFAGL) form a helical membrane-spanning segment. Positions 434, 437, and 438 each coordinate Na(+). Thr-439 is a serotonin binding site. Residues 444 to 463 (EGVITAVLDEFPHIWAKHRE) lie on the Cytoplasmic side of the membrane. Residues 464–483 (WFVLAVVITCFFGSLTTLTF) traverse the membrane as a helical segment. The Extracellular portion of the chain corresponds to 484–494 (GGAYVVKLLEE). Serotonin contacts are provided by Glu-494 and Tyr-495. The chain crosses the membrane as a helical span at residues 495–516 (YATGPAVLTVVFIEAIAVSWFY). Over 517-538 (GVTQFCSDVKEMLGFSPGWFWR) the chain is Cytoplasmic. A helical membrane pass occupies residues 539-558 (ICWVAVSPVFLLFIICSFLM). Phe-556 and Ser-559 together coordinate serotonin. The Extracellular segment spans residues 559–574 (SPPQLRLFQYSYPHWS). Residues 575 to 595 (VILGYCIGTSSVICIPTYITY) form a helical membrane-spanning segment. Topologically, residues 596 to 630 (RLVTTPGTLKERIIKSITPETPTEIPCGDICLNAV) are cytoplasmic. Positions 616–624 (TPTEIPCGD) are interaction with RAB4A.

The protein belongs to the sodium:neurotransmitter symporter (SNF) (TC 2.A.22) family. SLC6A4 subfamily. Monomer or homooligomer. Interacts (via C-terminus) with SCAMP2; the interaction is direct and retains transporter molecules intracellularly. Interacts with filamentous actin and STX1A. Interacts (via the N-terminus) with STX1A (via the H3 domain); this interaction regulates SLC4A6 channel conductance. Interacts with SEC23A, SEC24C and PATJ. Interacts with NOS1; the interaction may diminish the cell surface localization of SERT in the brain and, correspondingly, reduce serotonin reuptake. Interacts with TGFB1I1. Interacts with ITGAV:ITGB3. Interacts (via C-terminus) with ITGB3; this interaction regulates SLC6A4 trafficking. Phosphorylation at Thr-276 increases 5-HT uptake and is required for cGMP-mediated SERT regulation. In terms of tissue distribution, expressed in the intestinal crypt epithelial cells (at protein level).

The protein localises to the cell membrane. The protein resides in the endomembrane system. It is found in the endosome membrane. It localises to the synapse. Its subcellular location is the cell junction. The protein localises to the focal adhesion. The protein resides in the cell projection. It is found in the neuron projection. It carries out the reaction serotonin(out) + K(+)(in) + Na(+)(out) + H(+)(in) = serotonin(in) + K(+)(out) + Na(+)(in) + H(+)(out). Its function is as follows. Serotonin transporter that cotransports serotonin with one Na(+) ion in exchange for one K(+) ion and possibly one proton in an overall electroneutral transport cycle. Transports serotonin across the plasma membrane from the extracellular compartment to the cytosol thus limiting serotonin intercellular signaling. Essential for serotonin homeostasis in the central nervous system. In the developing somatosensory cortex, acts in glutamatergic neurons to control serotonin uptake and its trophic functions accounting for proper spatial organization of cortical neurons and elaboration of sensory circuits. In the mature cortex, acts primarily in brainstem raphe neurons to mediate serotonin uptake from the synaptic cleft back into the pre-synaptic terminal thus terminating serotonin signaling at the synapse. Modulates mucosal serotonin levels in the gastrointestinal tract through uptake and clearance of serotonin in enterocytes. Required for enteric neurogenesis and gastrointestinal reflexes. Regulates blood serotonin levels by ensuring rapid high affinity uptake of serotonin from plasma to platelets, where it is further stored in dense granules via vesicular monoamine transporters and then released upon stimulation. Mechanistically, the transport cycle starts with an outward-open conformation having Na1(+) and Cl(-) sites occupied. The binding of a second extracellular Na2(+) ion and serotonin substrate leads to structural changes to outward-occluded to inward-occluded to inward-open, where the Na2(+) ion and serotonin are released into the cytosol. Binding of intracellular K(+) ion induces conformational transitions to inward-occluded to outward-open and completes the cycle by releasing K(+) possibly together with a proton bound to Asp-98 into the extracellular compartment. Na1(+) and Cl(-) ions remain bound throughout the transport cycle. Additionally, displays serotonin-induced channel-like conductance for monovalent cations, mainly Na(+) ions. The channel activity is uncoupled from the transport cycle and may contribute to the membrane resting potential or excitability. The chain is Sodium-dependent serotonin transporter (SLC6A4) from Cavia porcellus (Guinea pig).